Consider the following 299-residue polypeptide: Glycine--tRNA ligase alpha subunit (299 aa).

Belongs to the class-II aminoacyl-tRNA synthetase family. As to quaternary structure, tetramer of two alpha and two beta subunits.

The protein resides in the cytoplasm. It catalyses the reaction tRNA(Gly) + glycine + ATP = glycyl-tRNA(Gly) + AMP + diphosphate. The chain is Glycine--tRNA ligase alpha subunit from Dichelobacter nodosus (strain VCS1703A).